The following is a 935-amino-acid chain: C-1-tetrahydrofolate synthase, cytoplasmic (935 aa).

The residue at position 1 (Met1) is an N-acetylmethionine. The interval 2–291 (APAEILNGKE…MLMQSTVESA (290 aa)) is methylenetetrahydrofolate dehydrogenase and methenyltetrahydrofolate cyclohydrolase (D/C) domain. Residues 52–56 (YINVK) and 99–101 (VQL) each bind substrate. Residue Lys56 is part of the active site. Residues 172 to 174 (GRS) and Ser197 each bind NADP(+). 272–276 (PGGVG) is a substrate binding site. The interval 310–935 (LNLKTPVPSD…PETEQVNGLF (626 aa)) is formyltetrahydrofolate synthetase domain. Ser318 bears the Phosphoserine mark. 380-387 (TPLGEGKS) is an ATP binding site. Residues Ser413 and Ser490 each carry the phosphoserine modification.

It in the N-terminal section; belongs to the tetrahydrofolate dehydrogenase/cyclohydrolase family. In the C-terminal section; belongs to the formate--tetrahydrofolate ligase family. In terms of assembly, homodimer. In terms of tissue distribution, ubiquitous.

Its subcellular location is the cytoplasm. The catalysed reaction is (6R)-5,10-methylene-5,6,7,8-tetrahydrofolate + NADP(+) = (6R)-5,10-methenyltetrahydrofolate + NADPH. It catalyses the reaction (6R)-5,10-methenyltetrahydrofolate + H2O = (6R)-10-formyltetrahydrofolate + H(+). It carries out the reaction (6S)-5,6,7,8-tetrahydrofolate + formate + ATP = (6R)-10-formyltetrahydrofolate + ADP + phosphate. The protein operates within one-carbon metabolism; tetrahydrofolate interconversion. Trifunctional enzyme that catalyzes the interconversion of three forms of one-carbon-substituted tetrahydrofolate: (6R)-5,10-methylene-5,6,7,8-tetrahydrofolate, 5,10-methenyltetrahydrofolate and (6S)-10-formyltetrahydrofolate. These derivatives of tetrahydrofolate are differentially required in nucleotide and amino acid biosynthesis, (6S)-10-formyltetrahydrofolate being required for purine biosynthesis while (6R)-5,10-methylene-5,6,7,8-tetrahydrofolate is used for serine and methionine biosynthesis for instance. This is C-1-tetrahydrofolate synthase, cytoplasmic (MTHFD1) from Homo sapiens (Human).